The chain runs to 1495 residues: MSLAVLLNKEDKDISDFSKTTAGKSAKKNSRERVADVAPTRVLDKKQAYLSQLNSEFNRIKKRDSIEQLYQDWKFINLQEFELISEWNQQSKDWQFDNTNDSQDLHFKKLYRDMSMINKEWAEYQSFKNANLSDIINEKDADEDEEDDEDELEDGEEDMEEDEASTGRHTNGKSMRGNGIQKSRKKDAAAAAAVGKAIKDDQTHADTVVTVNGDENEDGNNDEDNDNDNENNNDNDNDNDNDNDNDNENENDNDNDNDDEEENGEEDEEEEEIEDLDEEDFAAFEEQDDNDDEDFNPDVEKRRKRSSSSSSSTKLSMNSLSLITSKKINKNITINSDRPKIVRELIKMCNKNKHQKIKKRRFTNCIVTDYNPIDSKLNIKITLKQYHVKRLKKLINDAKREREREEALKNNVGLDGNDLDNDEDGSESHKRRKLNNNTANGADDANKRKFNTRHGLPTYGMKMNAKEARAIQRHYDNTYTTIWKDMARKDSTKMSRLVQQIQSIRSTNFRKTSSLCAREAKKWQSKNFKQIKDFQTRARRGIREMSNFWKKNEREERDLKKKIEKEAMEQAKKEEEEKESKRQAKKLNFLLTQTELYSHFIGRKIKTNELEGNNVSNNDSESQKNIDISALAPNKNDFHAIDFDNENDEQLRLRAAENASNALAETRAKAKQFDDHANAHGEEEEEDELNFQNPTSLGEITIEQPKILACTLKEYQLKGLNWLANLYDQGINGILADEMGLGKTVQSISVLAHLAENHNIWGPFLVVTPASTLHNWVNEISKFLPQFKILPYWGNANDRKVLRKFWDRKNLRYSKNAPFHVMVTSYQMVVTDANYLQKMKWQYMILDEAQAIKSSQSSRWKNLLSFHCRNRLLLTGTPIQNSMQELWALLHFIMPSLFDSHDEFNEWFSKDIESHAEANTKLNQQQLRRLHMILKPFMLRRVKKNVQSELGDKIEIDVLCDLTQRQAKLYQVLKSQISTNYDAIENAATNDSTSNSASNSGSDQNLINAVMQFRKVCNHPDLFERADVDSPFSFTTFGKTTSMLTASVANNNSSVISNSNMNLSSMSSNNISNGKFTDLIYSSRNPIKYSLPRLIYEDLILPNYNNDVDIANKLKNVKFNIFNPSINYELCLFLSKLTGEPSLNEFFRVSNTPLLKRVIERTNGPKNTDSLSFKTITQELLEVTRNAPSEGVMASLLNVKKHAYEREYLNCIQRGYHPNVSAPPVTIEVLGSSHVTNSINNELFDPLISQALSDIPAITQYNMHVKKGIPVEDFPKTGLFPEPLNKNFSSNISTPSMDRFITESAKLRKLDELLVKLKSEGHRVLIYFQMTKMMDLMEEYLTYRQYNHIRLDGSSKLEDRRDLVHDWQTNPEIFVFLLSTRAGGLGINLTAADTVIFYDSDWNPTIDSQAMDRAHRLGQTRQVTVYRLLVRGTIEERMRDRAKQKEQVQQVVMEGKTQEKNIKTIEVGENDSEVTREGSKSISQDGIKEAASALA.

Residues serine 65, serine 115, and serine 133 each carry the phosphoserine modification. Disordered stretches follow at residues 137–317 (NEKD…KLSM) and 399–458 (KRER…GLPT). Composition is skewed to acidic residues over residues 140–164 (DADEDEEDDEDELEDGEEDMEEDEA) and 214–297 (DENE…DFNP). Residues 307–317 (SSSSSSTKLSM) show a composition bias toward low complexity. Residues 399–408 (KREREREEAL) are compositionally biased toward basic and acidic residues. The region spanning 482–607 (IWKDMARKDS…SHFIGRKIKT (126 aa)) is the DBINO domain. Serine 616 carries the post-translational modification Phosphoserine. In terms of domain architecture, Helicase ATP-binding spans 724–896 (ANLYDQGING…WALLHFIMPS (173 aa)). 737 to 744 (DEMGLGKT) is an ATP binding site. A DEAQ box motif is present at residues 847 to 850 (DEAQ). One can recognise a Helicase C-terminal domain in the interval 1309–1473 (KLDELLVKLK…TIEVGENDSE (165 aa)). The segment at 1462–1495 (IKTIEVGENDSEVTREGSKSISQDGIKEAASALA) is disordered.

Belongs to the SNF2/RAD54 helicase family. Component of the chromatin-remodeling INO80 complex, at least composed of ARP4, ARP5, ARP8, RVB1, RVB2, TAF14, NHP10, IES1, IES3, IES4, IES6, ACT1, IES2, IES5 and INO80.

Its subcellular location is the nucleus. The enzyme catalyses ATP + H2O = ADP + phosphate + H(+). Functionally, ATPase component of the INO80 complex which remodels chromatin by shifting nucleosomes and is involved in DNA repair. Its ability to induce transcription of some phosphate-responsive genes is modulated by inositol polyphosphates. The INO80 complex is involved in DNA repair by associating with 'Ser-129' phosphorylated H2A histones as a response to DNA damage. This is Chromatin-remodeling ATPase INO80 (INO80) from Saccharomyces cerevisiae (strain YJM789) (Baker's yeast).